We begin with the raw amino-acid sequence, 206 residues long: Holliday junction branch migration complex subunit RuvA (206 aa).

The interval Met1–Gln64 is domain I. The tract at residues Ser65 to Ile144 is domain II. The flexible linker stretch occupies residues Gly145 to Val154. The tract at residues Val154–Arg206 is domain III.

The protein belongs to the RuvA family. As to quaternary structure, homotetramer. Forms an RuvA(8)-RuvB(12)-Holliday junction (HJ) complex. HJ DNA is sandwiched between 2 RuvA tetramers; dsDNA enters through RuvA and exits via RuvB. An RuvB hexamer assembles on each DNA strand where it exits the tetramer. Each RuvB hexamer is contacted by two RuvA subunits (via domain III) on 2 adjacent RuvB subunits; this complex drives branch migration. In the full resolvosome a probable DNA-RuvA(4)-RuvB(12)-RuvC(2) complex forms which resolves the HJ.

The protein resides in the cytoplasm. Functionally, the RuvA-RuvB-RuvC complex processes Holliday junction (HJ) DNA during genetic recombination and DNA repair, while the RuvA-RuvB complex plays an important role in the rescue of blocked DNA replication forks via replication fork reversal (RFR). RuvA specifically binds to HJ cruciform DNA, conferring on it an open structure. The RuvB hexamer acts as an ATP-dependent pump, pulling dsDNA into and through the RuvAB complex. HJ branch migration allows RuvC to scan DNA until it finds its consensus sequence, where it cleaves and resolves the cruciform DNA. This is Holliday junction branch migration complex subunit RuvA from Mesorhizobium japonicum (strain LMG 29417 / CECT 9101 / MAFF 303099) (Mesorhizobium loti (strain MAFF 303099)).